A 166-amino-acid chain; its full sequence is Interferon gamma (166 aa).

The N-terminal stretch at 1–23 (MKYTSYFLALLLCVLLGFSGSYG) is a signal peptide. Gln24 is subject to Pyrrolidone carboxylic acid. Asn39 and Asn106 each carry an N-linked (GlcNAc...) asparagine glycan.

Belongs to the type II (or gamma) interferon family. Homodimer. Interacts with IFNGR1 (via extracellular domain); this interaction promotes IFNGR1 dimerization. In terms of tissue distribution, released primarily from activated T lymphocytes.

Its subcellular location is the secreted. In terms of biological role, type II interferon produced by immune cells such as T-cells and NK cells that plays crucial roles in antimicrobial, antiviral, and antitumor responses by activating effector immune cells and enhancing antigen presentation. Primarily signals through the JAK-STAT pathway after interaction with its receptor IFNGR1 to affect gene regulation. Upon IFNG binding, IFNGR1 intracellular domain opens out to allow association of downstream signaling components JAK2, JAK1 and STAT1, leading to STAT1 activation, nuclear translocation and transcription of IFNG-regulated genes. Many of the induced genes are transcription factors such as IRF1 that are able to further drive regulation of a next wave of transcription. Plays a role in class I antigen presentation pathway by inducing a replacement of catalytic proteasome subunits with immunoproteasome subunits. In turn, increases the quantity, quality, and repertoire of peptides for class I MHC loading. Increases the efficiency of peptide generation also by inducing the expression of activator PA28 that associates with the proteasome and alters its proteolytic cleavage preference. Up-regulates as well MHC II complexes on the cell surface by promoting expression of several key molecules such as cathepsins B/CTSB, H/CTSH, and L/CTSL. Participates in the regulation of hematopoietic stem cells during development and under homeostatic conditions by affecting their development, quiescence, and differentiation. The chain is Interferon gamma (IFNG) from Bubalus carabanensis (Swamp type water buffalo).